Reading from the N-terminus, the 99-residue chain is Putative endopeptidase RzpR (99 aa).

The protein is Putative endopeptidase RzpR (rzpR) of Escherichia coli (strain K12).